The chain runs to 962 residues: Exportin-T (962 aa).

At Met-1 the chain carries N-acetylmethionine. The tract at residues 1-385 is necessary for interaction with Ran, nuclear localization and nuclear import; the sequence is MDEQALLGLN…MLAVMKKLTY (385 aa). Residues 443 to 962 form a necessary for tRNA-binding, cytoplasmic localization and nuclear export region; it reads FMEVEVAIRL…LKVFFQRAKP (520 aa). The residue at position 634 (Lys-634) is an N6-acetyllysine.

Belongs to the exportin family. As to quaternary structure, found in a complex with XPOT, Ran and tRNA. Probably found in a complex with nucleoporins. Interacts with Ran and tRNA in a GTP-dependent manner.

The protein localises to the nucleus. It localises to the cytoplasm. In terms of biological role, mediates the nuclear export of aminoacylated tRNAs. In the nucleus binds to tRNA and to the GTPase Ran in its active GTP-bound form. Docking of this trimeric complex to the nuclear pore complex (NPC) is mediated through binding to nucleoporins. Upon transit of a nuclear export complex into the cytoplasm, disassembling of the complex and hydrolysis of Ran-GTP to Ran-GDP (induced by RANBP1 and RANGAP1, respectively) cause release of the tRNA from the export receptor. XPOT then return to the nuclear compartment and mediate another round of transport. The directionality of nuclear export is thought to be conferred by an asymmetric distribution of the GTP- and GDP-bound forms of Ran between the cytoplasm and nucleus. The polypeptide is Exportin-T (XPOT) (Homo sapiens (Human)).